We begin with the raw amino-acid sequence, 2409 residues long: Reducing polyketide synthase FUB1 (2409 aa).

The span at 1 to 43 shows a compositional bias: low complexity; it reads MTLSNGSNGANGTSNGHGAHPSANGFHNAANGGANNGTPNGGA. Residues 1-49 are disordered; that stretch reads MTLSNGSNGANGTSNGHGAHPSANGFHNAANGGANNGTPNGGAEYNASL. The region spanning 57–479 is the Ketosynthase family 3 (KS3) domain; sequence SSAIAVIGVS…GANAHAVLDD (423 aa). Active-site for beta-ketoacyl synthase activity residues include cysteine 230, histidine 365, and histidine 403. A malonyl-CoA:ACP transacylase (MAT) domain region spans residues 608–929; it reads TFIFTGQGAQ…FSAIKRKQDA (322 aa). The active-site For malonyltransferase activity is the serine 699. Residues 994–1127 form an N-terminal hotdog fold region; sequence LELLGVRDPR…GLVSTSYKRE (134 aa). Positions 994 to 1307 constitute a PKS/mFAS DH domain; the sequence is LELLGVRDPR…TVPLRGASDP (314 aa). Residues 995 to 1302 are dehydratase (DH) domain; that stretch reads ELLGVRDPRS…LEGCKTVPLR (308 aa). Residue histidine 1026 is the Proton acceptor; for dehydratase activity of the active site. The tract at residues 1155–1307 is C-terminal hotdog fold; that stretch reads LPSVDPTVFY…TVPLRGASDP (153 aa). The Proton donor; for dehydratase activity role is filled by aspartate 1220. The interval 1713–2025 is enoyl reductase (ER) domain; the sequence is GLLDTLEYLS…SGGHVGKIVL (313 aa). The ketoreductase (KR) domain stretch occupies residues 2049 to 2225; sequence ATYVLIGGLG…AATSINLSLV (177 aa). In terms of domain architecture, Carrier spans 2328 to 2405; it reads EVYEIVLQQL…GFAKKVMAKS (78 aa). Serine 2365 carries the post-translational modification O-(pantetheine 4'-phosphoryl)serine.

The protein operates within mycotoxin biosynthesis. Functionally, reducing polyketide synthase; part of the gene cluster that mediates the biosynthesis of fusaric acid, a mycotoxin with low to moderate toxicity to animals and humans, but with high phytotoxic properties. L-aspartate is suggested as fusaric acid amino acid precursor that is activated and further processed to O-acetyl-L-homoserine by cluster enzymes aspartate kinase FUB3 and homoserine O-acetyltransferase FUB5, as well as enzymes of the primary metabolism. The polyketide synthase (PKS) FUB1 generates the triketide trans-2-hexenal which is presumptively released by the hydrolase FUB4 and linked to the NRPS-bound amino acid precursor by NAD(P)-dependent dehydrogenase FUB6. FUB1, FUB4, and the non-canonical NRPS Fub8 may form an enzyme complex. Further processing of the NRPS-bound intermediate might be carried out by FUB6 and the sulfhydrylase FUB7, enabling a spontaneous electrocyclization to close the carbon backbone of fusaric acid. Dihydrofusaric acid is likely to be released via reduction by the thioester reductase (TR) domain of FUB8 whereupon the final oxidation to fusaric acid may (also) be performed by the FMN-dependent dehydrogenase FUB9. The polypeptide is Reducing polyketide synthase FUB1 (Gibberella moniliformis (strain M3125 / FGSC 7600) (Maize ear and stalk rot fungus)).